The primary structure comprises 183 residues: Shikimate kinase (183 aa).

25 to 30 (GAGKTT) is a binding site for ATP. Thr29 serves as a coordination point for Mg(2+). Substrate-binding residues include Asp47, Arg71, and Gly93. An ATP-binding site is contributed by Arg131. Position 150 (Arg150) interacts with substrate.

This sequence belongs to the shikimate kinase family. As to quaternary structure, monomer. Mg(2+) serves as cofactor.

It localises to the cytoplasm. It catalyses the reaction shikimate + ATP = 3-phosphoshikimate + ADP + H(+). Its pathway is metabolic intermediate biosynthesis; chorismate biosynthesis; chorismate from D-erythrose 4-phosphate and phosphoenolpyruvate: step 5/7. Its function is as follows. Catalyzes the specific phosphorylation of the 3-hydroxyl group of shikimic acid using ATP as a cosubstrate. This is Shikimate kinase from Dechloromonas aromatica (strain RCB).